Consider the following 438-residue polypeptide: MSEASGRAAGNEMPAKKQKLSSDENSNPELSGDENDDSVSIESGTNTERPDTPTNAANAPGRKGWGKGKWKSKKCKYSFKCVNSLKEDHNQPLFGVQFNWHSKEGDPLVFATVGSNRVTLYECHPQGDIRLLQSYVDADADENFYTCAWTYDSNTSHPLLAVAGSRGIIRIINPITMQCIKHYVGHGNAINELKFHPRDPNLLLSVSKDHALRLWNIQTDTLVAIFGGVEGHRDEVLSADYDLLGEKIMSCGMDHSLKLWRINSLRMKTAIKESYDYNPNKTNRPFVSQKVHFPDFSTRDIHRNYVDCVRWLGDLILSKSCENAIVCWKPGKMEDDIEKIKASESNVTILGRFDYSQCDIWYMRFSMDFWQKMLALGNQVGKLYVWDLEVEDPHKAKCTTLTYPKCASAIRQTSFSRDSSVLIAVCDDSTIWRWDRLR.

The tract at residues 1–70 (MSEASGRAAG…GRKGWGKGKW (70 aa)) is disordered. Positions 40 to 57 (SIESGTNTERPDTPTNAA) are enriched in polar residues. WD repeat units lie at residues 88-131 (DHNQ…DIRL), 139-182 (DADE…CIKH), 185-225 (GHGN…LVAI), 231-270 (GHRD…MKTA), 301-338 (IHRN…DDIE), 356-396 (SQCD…PHKA), and 405-438 (KCAS…DRLR).

The protein belongs to the WD repeat ESC family. In terms of assembly, component of the prc2/eed-ezh2 complex. Can interact with ezh2, hdac1 and taf9. Interacts with yy1.

The protein localises to the nucleus. Its function is as follows. Polycomb group (PcG) protein. Component of the prc2/eed-ezh2 complex, which methylates 'Lys-9' and 'Lys-27' of histone H3, leading to transcriptional repression of the affected target gene. May play a role in neural induction. This Xenopus laevis (African clawed frog) protein is Polycomb protein eed-B (eed-b).